The primary structure comprises 288 residues: Pyridoxal kinase PdxY (288 aa).

Substrate is bound by residues serine 12 and 47–48 (TQ). Residues aspartate 114, glutamate 151, lysine 184, and 211–214 (RPLL) contribute to the ATP site. A substrate-binding site is contributed by aspartate 225.

Belongs to the pyridoxine kinase family. PdxY subfamily. As to quaternary structure, homodimer. Requires Mg(2+) as cofactor.

It carries out the reaction pyridoxal + ATP = pyridoxal 5'-phosphate + ADP + H(+). The protein operates within cofactor metabolism; pyridoxal 5'-phosphate salvage; pyridoxal 5'-phosphate from pyridoxal: step 1/1. In terms of biological role, pyridoxal kinase involved in the salvage pathway of pyridoxal 5'-phosphate (PLP). Catalyzes the phosphorylation of pyridoxal to PLP. In Pseudomonas savastanoi pv. phaseolicola (strain 1448A / Race 6) (Pseudomonas syringae pv. phaseolicola (strain 1448A / Race 6)), this protein is Pyridoxal kinase PdxY.